We begin with the raw amino-acid sequence, 386 residues long: Peroxisomal membrane protein PEX13 (386 aa).

The interval 1–76 (MSSTAVPRPK…SSGTYGESNT (76 aa)) is disordered. Residues 1-263 (MSSTAVPRPK…KATRRKISWK (263 aa)) lie on the Lumenal side of the membrane. A compositionally biased stretch (polar residues) spans 23 to 39 (RNAQSLSAMMTSNQQDS). The segment covering 44-55 (ESNNSNSASESA) has biased composition (low complexity). Over residues 65–76 (LNSSGTYGESNT) the composition is skewed to polar residues. Residues 264 to 280 (PLLFFLMAVFGFPYLLN) form a helical membrane-spanning segment. At 281–386 (KFITKLQTSG…EHVDDETRTH (106 aa)) the chain is on the cytoplasmic side. The 67-residue stretch at 306 to 372 (SKLEFARALY…PYNYIEIIKR (67 aa)) folds into the SH3 domain.

The protein belongs to the peroxin-13 family. In terms of assembly, interacts (via SH3 domain) with PEX14 (via SH3-binding motif); forming the PEX13-PEX14 docking complex.

It is found in the peroxisome membrane. Functionally, component of the PEX13-PEX14 docking complex, a translocon channel that specifically mediates the import of peroxisomal cargo proteins bound to PEX5 or PEX21 receptors. The PEX13-PEX14 docking complex forms a large import pore which can be opened to a diameter of about 9 nm. Mechanistically, PEX5 (or PEX21) receptor along with cargo proteins associates with the PEX14 subunit of the PEX13-PEX14 docking complex in the cytosol, leading to the insertion of the receptor into the organelle membrane with the concomitant translocation of the cargo into the peroxisome matrix. In Saccharomyces cerevisiae (strain ATCC 204508 / S288c) (Baker's yeast), this protein is Peroxisomal membrane protein PEX13.